The primary structure comprises 90 residues: Small ribosomal subunit protein uS15 (90 aa).

Belongs to the universal ribosomal protein uS15 family. Part of the 30S ribosomal subunit. Forms a bridge to the 50S subunit in the 70S ribosome, contacting the 23S rRNA.

In terms of biological role, one of the primary rRNA binding proteins, it binds directly to 16S rRNA where it helps nucleate assembly of the platform of the 30S subunit by binding and bridging several RNA helices of the 16S rRNA. Forms an intersubunit bridge (bridge B4) with the 23S rRNA of the 50S subunit in the ribosome. In Campylobacter fetus subsp. fetus (strain 82-40), this protein is Small ribosomal subunit protein uS15.